A 434-amino-acid polypeptide reads, in one-letter code: Eukaryotic translation initiation factor 3 subunit E (434 aa).

The 174-residue stretch at 219 to 392 folds into the PCI domain; sequence FFNHPKGRDL…GHVVMGTQPL (174 aa).

This sequence belongs to the eIF-3 subunit E family. Component of the eukaryotic translation initiation factor 3 (eIF-3) complex. The eIF-3 complex interacts with pix. Interacts with mxt.

It is found in the cytoplasm. In terms of biological role, component of the eukaryotic translation initiation factor 3 (eIF-3) complex, which is involved in protein synthesis of a specialized repertoire of mRNAs and, together with other initiation factors, stimulates binding of mRNA and methionyl-tRNAi to the 40S ribosome. The eIF-3 complex specifically targets and initiates translation of a subset of mRNAs involved in cell proliferation. The chain is Eukaryotic translation initiation factor 3 subunit E (eIF3-S6) from Drosophila pseudoobscura pseudoobscura (Fruit fly).